A 132-amino-acid polypeptide reads, in one-letter code: ATP synthase epsilon chain (132 aa).

It belongs to the ATPase epsilon chain family. In terms of assembly, F-type ATPases have 2 components, CF(1) - the catalytic core - and CF(0) - the membrane proton channel. CF(1) has five subunits: alpha(3), beta(3), gamma(1), delta(1), epsilon(1). CF(0) has three main subunits: a, b and c.

Its subcellular location is the cell membrane. Produces ATP from ADP in the presence of a proton gradient across the membrane. The sequence is that of ATP synthase epsilon chain (atpC) from Bacillus caldotenax.